We begin with the raw amino-acid sequence, 617 residues long: 1-deoxy-D-xylulose-5-phosphate synthase (617 aa).

Thiamine diphosphate-binding positions include histidine 76 and glycine 117 to serine 119. Aspartate 148 is a binding site for Mg(2+). Thiamine diphosphate-binding positions include glycine 149–alanine 150, asparagine 177, tyrosine 285, and glutamate 366. Asparagine 177 is a binding site for Mg(2+).

The protein belongs to the transketolase family. DXPS subfamily. As to quaternary structure, homodimer. Requires Mg(2+) as cofactor. It depends on thiamine diphosphate as a cofactor.

The enzyme catalyses D-glyceraldehyde 3-phosphate + pyruvate + H(+) = 1-deoxy-D-xylulose 5-phosphate + CO2. It participates in metabolic intermediate biosynthesis; 1-deoxy-D-xylulose 5-phosphate biosynthesis; 1-deoxy-D-xylulose 5-phosphate from D-glyceraldehyde 3-phosphate and pyruvate: step 1/1. Its function is as follows. Catalyzes the acyloin condensation reaction between C atoms 2 and 3 of pyruvate and glyceraldehyde 3-phosphate to yield 1-deoxy-D-xylulose-5-phosphate (DXP). This Histophilus somni (strain 2336) (Haemophilus somnus) protein is 1-deoxy-D-xylulose-5-phosphate synthase.